The chain runs to 127 residues: Dual endothelin-1/VEGF signal peptide receptor (127 aa).

Residues 1–69 (MSTFYVTAVP…EMKSRWNWGS (69 aa)) lie on the Extracellular side of the membrane. Residues 70–88 (ITCIMCFTCVGSQLSMSSS) traverse the membrane as a helical segment. Over 89-127 (KASNFSGPLQLYQRGIGHITNPYRRPPAPAWPCSSSGTT) the chain is Cytoplasmic.

In terms of tissue distribution, prominently expressed in brain and heart tissues. Weakly expressed in aorta, adrenal gland, and lung tissues.

It is found in the cell membrane. Functionally, in the Dahl salt-resistant strain, acts as a dual receptor for both endothelin-1 and the signal sequence of vascular endothelial growth factor A and does not act as a receptor for angiotensin-2. Does not bind the VEGFA mature protein. In the Dahl salt-sensitive strain, acts as a dual endothelin-1/angiotensin-2 receptor that is functionally coupled to a calcium-mobilizing transduction system, responding equivalently to both endothelin-1/EDN1 and angiotensin-2 peptides in a highly specific manner. May play a role in angiogenesis with a significant role in cardiovascular and neural development. This is Dual endothelin-1/VEGF signal peptide receptor from Rattus norvegicus (Rat).